The sequence spans 757 residues: uncharacterized protein (757 aa).

The 70-residue stretch at 640–709 (GMILEGVVSN…ARKRIALTMR (70 aa)) folds into the S1 motif domain. A compositionally biased stretch (basic and acidic residues) spans 710-741 (LDDEPGGAKHKMPSENRSRERTAGRKPQRNDR). The interval 710-757 (LDDEPGGAKHKMPSENRSRERTAGRKPQRNDRAPANSAMADAFAKLKR) is disordered.

This is an uncharacterized protein from Neisseria meningitidis serogroup A / serotype 4A (strain DSM 15465 / Z2491).